A 116-amino-acid polypeptide reads, in one-letter code: Phosphoribosyl-AMP cyclohydrolase (116 aa).

Asp-85 contributes to the Mg(2+) binding site. Cys-86 provides a ligand contact to Zn(2+). Mg(2+) is bound by residues Asp-87 and Asp-89. Cys-102 and Cys-109 together coordinate Zn(2+).

Belongs to the PRA-CH family. As to quaternary structure, homodimer. It depends on Mg(2+) as a cofactor. Zn(2+) serves as cofactor.

The protein resides in the cytoplasm. The enzyme catalyses 1-(5-phospho-beta-D-ribosyl)-5'-AMP + H2O = 1-(5-phospho-beta-D-ribosyl)-5-[(5-phospho-beta-D-ribosylamino)methylideneamino]imidazole-4-carboxamide. It participates in amino-acid biosynthesis; L-histidine biosynthesis; L-histidine from 5-phospho-alpha-D-ribose 1-diphosphate: step 3/9. Functionally, catalyzes the hydrolysis of the adenine ring of phosphoribosyl-AMP. The sequence is that of Phosphoribosyl-AMP cyclohydrolase from Thermobifida fusca (strain YX).